The primary structure comprises 142 residues: Cell division protein SepF (142 aa).

Over residues Glu21–Glu31 the composition is skewed to acidic residues. The segment at Glu21–Asn46 is disordered.

This sequence belongs to the SepF family. In terms of assembly, homodimer. Interacts with FtsZ.

It is found in the cytoplasm. Cell division protein that is part of the divisome complex and is recruited early to the Z-ring. Probably stimulates Z-ring formation, perhaps through the cross-linking of FtsZ protofilaments. Its function overlaps with FtsA. The protein is Cell division protein SepF of Brevibacillus brevis (strain 47 / JCM 6285 / NBRC 100599).